The primary structure comprises 198 residues: MSSLEELMAKAKDLHAEGHSSGQIADELSLSVDTVTWLLTQGKAGIAAPKDVHIDWTNVSSNTTLLGGISSMMLAHFEAANEEEEGVDAVIGISVSGVPLATMIAAEDGLNLAIYHPSKHNPEGKIGSISGNFSKVSQKRCLIVDDCITTGNTLTEIVNYLRRHKATPVGICVIFDKRGVKEIEGVPVYSLFTIKRID.

It belongs to the purine/pyrimidine phosphoribosyltransferase family. GfcR subfamily.

In Methanocorpusculum labreanum (strain ATCC 43576 / DSM 4855 / Z), this protein is Transcriptional regulator GfcR.